Reading from the N-terminus, the 403-residue chain is Arginine biosynthesis bifunctional protein ArgJ (403 aa).

6 residues coordinate substrate: Thr-149, Lys-175, Thr-186, Glu-272, Asn-398, and Thr-403. Thr-186 functions as the Nucleophile in the catalytic mechanism.

Belongs to the ArgJ family. As to quaternary structure, heterotetramer of two alpha and two beta chains.

The protein resides in the cytoplasm. It catalyses the reaction N(2)-acetyl-L-ornithine + L-glutamate = N-acetyl-L-glutamate + L-ornithine. It carries out the reaction L-glutamate + acetyl-CoA = N-acetyl-L-glutamate + CoA + H(+). It participates in amino-acid biosynthesis; L-arginine biosynthesis; L-ornithine and N-acetyl-L-glutamate from L-glutamate and N(2)-acetyl-L-ornithine (cyclic): step 1/1. Its pathway is amino-acid biosynthesis; L-arginine biosynthesis; N(2)-acetyl-L-ornithine from L-glutamate: step 1/4. Functionally, catalyzes two activities which are involved in the cyclic version of arginine biosynthesis: the synthesis of N-acetylglutamate from glutamate and acetyl-CoA as the acetyl donor, and of ornithine by transacetylation between N(2)-acetylornithine and glutamate. This Caldanaerobacter subterraneus subsp. tengcongensis (strain DSM 15242 / JCM 11007 / NBRC 100824 / MB4) (Thermoanaerobacter tengcongensis) protein is Arginine biosynthesis bifunctional protein ArgJ.